The following is a 318-amino-acid chain: uncharacterized protein (318 aa).

To E.coli YfaT and P.aeruginosa PA4490.

This is an uncharacterized protein from Thermotoga maritima (strain ATCC 43589 / DSM 3109 / JCM 10099 / NBRC 100826 / MSB8).